The sequence spans 131 residues: Superoxide dismutase [Ni] (131 aa).

Residues 1 to 14 (MLSRLFAPKVTVSA) constitute a propeptide that is removed on maturation. Histidine 15, cysteine 16, and cysteine 20 together coordinate Ni(2+).

The protein belongs to the nickel superoxide dismutase family. As to quaternary structure, homohexamer. The hexameric protein has a roughly the shape of a hollow sphere with an outer diameter of 60 angstroms and a large interior cavity. Requires Ni(2+) as cofactor.

The protein localises to the cytoplasm. It catalyses the reaction 2 superoxide + 2 H(+) = H2O2 + O2. This Streptomyces coelicolor (strain ATCC BAA-471 / A3(2) / M145) protein is Superoxide dismutase [Ni] (sodN).